The chain runs to 889 residues: MLMTQMTVEQFAHDLGMLPGLLLEQLQAAGVDKRSAADFVTEQDKTRLLDYLRKSHGSSGPRTRITLARKQTTEIKQSDSTGRPRTIEVKVKKTRVLTRQNEPEVIEKSVSEEPAPLKMVETPEPTIVKSVVDAEQMALRAEEARKRSELIARQAAELKEKQEKRRQQAAAQANVKKEPAPAEQESGPATAVTPGSVTEISSKLPETGAAATPATSTAPATTSTTAATKGHAPQKPVVKPEEKGEKKKKPTKQDAWKDEPVKRREPKARGDLSGGQEWRMRKDKHGKYKSDELQSQHAFSVPTEPVIHEVLIPETISVGALAQKMAVKAAEVIKVLMKMGSMVTINQMLDQETAMVVVEEMGHIAKIAASDNPESFLEEVDVSSDEARMEPRAPVVTVMGHVDHGKTSLLDYIRRTRVAGGEAGGITQHIGAYHVETSRGVITFLDTPGHEAFTAMRARGAKITDIVILVVAADDGVMPQTIEAIHHAKAANIPIVVAVNKMDKPEANFDRIKQELVNHGVVPEDWGGDAMFIGVSAKTGLGIDELLEAVLLQAEVLELKAVREAPAKGVVIESRLDKGRGPVATVLVQSGTLRRGDAVLTGAVFGKIRAMLNERGKSISEASTSIPVEIQGLSEVAVAGEVFIALDDERKAREIALFRQGKFRDVRLDKLQVAKMEDVFGQHEDVSTLNLIIKADVQGSCEALVYALKKLETDEVKINVVHSGVGAIIESDINLALASKAVVIGFNCRADLGARKLITSTGVDVRYYNIIYEAVDEVKKALSGMMMPDRKEKILGMVDIREIYRISKVGVVAGCYVLEGLIKRDALVRLLRDGLVIHSGSLDSLKRFKEDVREVKSGFECGLSLKNFNDIQQGDQIEVYEIVETARVL.

The tract at residues Leu-158 to Gln-296 is disordered. The span at Ala-209–Thr-228 shows a compositional bias: low complexity. Residues Val-238–Gly-270 are compositionally biased toward basic and acidic residues. Residues Pro-391 to Lys-560 enclose the tr-type G domain. Residues Gly-400–Thr-407 are G1. Gly-400 to Thr-407 contacts GTP. The G2 stretch occupies residues Gly-425–His-429. The segment at Asp-446–Gly-449 is G3. GTP is bound by residues Asp-446 to His-450 and Asn-500 to Asp-503. The G4 stretch occupies residues Asn-500–Asp-503. Positions Ser-536–Lys-538 are G5.

The protein belongs to the TRAFAC class translation factor GTPase superfamily. Classic translation factor GTPase family. IF-2 subfamily.

The protein resides in the cytoplasm. One of the essential components for the initiation of protein synthesis. Protects formylmethionyl-tRNA from spontaneous hydrolysis and promotes its binding to the 30S ribosomal subunits. Also involved in the hydrolysis of GTP during the formation of the 70S ribosomal complex. This is Translation initiation factor IF-2 from Nitrosomonas europaea (strain ATCC 19718 / CIP 103999 / KCTC 2705 / NBRC 14298).